The chain runs to 123 residues: Large ribosomal subunit protein bL12 (123 aa).

Belongs to the bacterial ribosomal protein bL12 family. As to quaternary structure, homodimer. Part of the ribosomal stalk of the 50S ribosomal subunit. Forms a multimeric L10(L12)X complex, where L10 forms an elongated spine to which 2 to 4 L12 dimers bind in a sequential fashion. Binds GTP-bound translation factors.

Its function is as follows. Forms part of the ribosomal stalk which helps the ribosome interact with GTP-bound translation factors. Is thus essential for accurate translation. This is Large ribosomal subunit protein bL12 from Roseobacter denitrificans (strain ATCC 33942 / OCh 114) (Erythrobacter sp. (strain OCh 114)).